Consider the following 701-residue polypeptide: Protein SOSEKI 1 (701 aa).

The tract at residues 8–101 is DIX-like oligomerization domain; the sequence is LSAQVLYQLS…YVLRASELID (94 aa). Disordered regions lie at residues 238 to 262, 300 to 329, 366 to 389, and 538 to 575; these read STVHGVHTPPSPSLKSSTELPFSPG, LPPNTHSTHEDNSFWRDSRSKSPSPSSLNE, PYNTCEGASTKIPESKHNSPYRTK, and IASSKPLPPGFHKGTNDTKPVQITPRRTPRNSIPLASP. Over residues 306 to 319 the composition is skewed to basic and acidic residues; sequence STHEDNSFWRDSRS. The C2HC/C3H-type zinc-finger motif lies at 658–687; sequence ILQECSICRRTFKPDSLQVHMRGCHPPQYA. Zn(2+) is bound by residues Cys-662, Cys-665, His-677, and Cys-681.

Belongs to the SOSEKI family. In terms of assembly, homodimer. Forms long polymer filaments with other SOKs proteins polymers crucial for polar localization and biological activity. Requires Zn(2+) as cofactor.

The protein localises to the cell membrane. In terms of biological role, SOSEKI proteins locally interpret global polarity cues and can influence cell division orientation to coordinate cell polarization relative to body axes. This is Protein SOSEKI 1 from Physcomitrium patens (Spreading-leaved earth moss).